A 218-amino-acid chain; its full sequence is Large ribosomal subunit protein uL3 (218 aa).

Belongs to the universal ribosomal protein uL3 family. As to quaternary structure, part of the 50S ribosomal subunit. Forms a cluster with proteins L14 and L19.

In terms of biological role, one of the primary rRNA binding proteins, it binds directly near the 3'-end of the 23S rRNA, where it nucleates assembly of the 50S subunit. The polypeptide is Large ribosomal subunit protein uL3 (Corynebacterium glutamicum (strain R)).